Here is a 589-residue protein sequence, read N- to C-terminus: MRTHYSSDVNEKLQNQKVTICGWVHRRRDHGGVIFLDIRDRTGLVQLVFNPESKAFKVADSLRGEYVIKATGTVNLRPEGQENKNLASGKVEIIGEDLEIVNKSKTIPFQLDDFQSTGEDVKLKYRYIDLRRPEMQNKLITRSKAIRYVRNFLDNNGFLDIETPFLTKATPEGARDYLVPSRNFNGKFYALPQSPQLFKQLLMVSGFDRYYQVVKCFRDEDLRADRQPEFTQIDIEASFIDEAFIMSTMEKMIAGLFDATIGVKFDTPFQVMTYAEAMDKYGSDKPDLRIPLEFVNIKEDMKNEEFKVFSGPANDPEARVVAMRVPGGNDKLSRKKIDEYTKFVGIYGARGLAYIKINSLSEGKEGLQSPIVKNISEETLFKVIEKTGAQVGDVLFFGAAKAKIVNDSMGALRAKIGEDFEIFTKDWAPLWVVDFPMFEKDDNRLYAVHHPFTAPKVDTVEELTKDPENLLSRAYDMVINGYEVGGGSIRIHRQDMQAKVFNLLGISDEEAREKFGFMLDALSYGTPIHGGIAFGVDRLIMLLTNTTNIRDVIAFPKTQTASCLMTEAPSNVSLEQLNELGIAVKKEDK.

Glutamate 172 contributes to the L-aspartate binding site. An aspartate region spans residues 196–199; that stretch reads QLFK. Arginine 218 provides a ligand contact to L-aspartate. Residues 218 to 220 and glutamine 227 each bind ATP; that span reads RDE. Histidine 449 provides a ligand contact to L-aspartate. Glutamate 483 is a binding site for ATP. Arginine 490 lines the L-aspartate pocket. 535-538 is an ATP binding site; it reads GVDR.

It belongs to the class-II aminoacyl-tRNA synthetase family. Type 1 subfamily. Homodimer.

The protein localises to the cytoplasm. It carries out the reaction tRNA(Asx) + L-aspartate + ATP = L-aspartyl-tRNA(Asx) + AMP + diphosphate. Its function is as follows. Aspartyl-tRNA synthetase with relaxed tRNA specificity since it is able to aspartylate not only its cognate tRNA(Asp) but also tRNA(Asn). Reaction proceeds in two steps: L-aspartate is first activated by ATP to form Asp-AMP and then transferred to the acceptor end of tRNA(Asp/Asn). This Francisella philomiragia subsp. philomiragia (strain ATCC 25017 / CCUG 19701 / FSC 153 / O#319-036) protein is Aspartate--tRNA(Asp/Asn) ligase.